Consider the following 81-residue polypeptide: Sec-independent protein translocase protein TatA (81 aa).

The helical transmembrane segment at 1 to 21 threads the bilayer; the sequence is MGGLQPWHWVIVIAVFVLLFG. Basic and acidic residues predominate over residues 46–56; the sequence is MQAESKGDEPK. The tract at residues 46–81 is disordered; the sequence is MQAESKGDEPKPATPIASERVDTTAPEQQSTDRHTA.

It belongs to the TatA/E family. As to quaternary structure, the Tat system comprises two distinct complexes: a TatABC complex, containing multiple copies of TatA, TatB and TatC subunits, and a separate TatA complex, containing only TatA subunits. Substrates initially bind to the TatABC complex, which probably triggers association of the separate TatA complex to form the active translocon.

Its subcellular location is the cell membrane. Functionally, part of the twin-arginine translocation (Tat) system that transports large folded proteins containing a characteristic twin-arginine motif in their signal peptide across membranes. TatA could form the protein-conducting channel of the Tat system. This is Sec-independent protein translocase protein TatA from Mycolicibacterium smegmatis (strain ATCC 700084 / mc(2)155) (Mycobacterium smegmatis).